The following is a 183-amino-acid chain: Adenine phosphoribosyltransferase (183 aa).

This sequence belongs to the purine/pyrimidine phosphoribosyltransferase family. As to quaternary structure, homodimer.

The protein resides in the cytoplasm. The enzyme catalyses AMP + diphosphate = 5-phospho-alpha-D-ribose 1-diphosphate + adenine. Its pathway is purine metabolism; AMP biosynthesis via salvage pathway; AMP from adenine: step 1/1. In terms of biological role, catalyzes a salvage reaction resulting in the formation of AMP, that is energically less costly than de novo synthesis. This Escherichia coli O157:H7 protein is Adenine phosphoribosyltransferase.